A 122-amino-acid polypeptide reads, in one-letter code: RxLR effector protein Avh52 (122 aa).

Residues 1-21 (MRLTSILVLVIAATFHTTGTA) form the signal peptide. Residues 50–68 (RLLRRVEKDKVDYEQDEQR) carry the RxLR-dEER motif. Positions 69–86 (SFGALKDAVKKLNPVTAV) are TAP1-binding. Residues 87–98 (KKFFKQRARRKK) form a nuclear localization signal (NLS) region.

Belongs to the RxLR effector family. In terms of assembly, interacts with host acetyl transferase TAP1.

It localises to the secreted. The protein resides in the host nucleus. In terms of biological role, effector that suppresses plant defense responses during the early stages of pathogen infection. Suppresses cell death induced by effectors and PAMPs in plant hosts. Interacts with host acetyltransferase TAP1 and causes TAP1 relocation into the nucleus where it acetylates histones H2A and H3 during early infection, thereby promoting susceptibility of host plant to P.sojae. The polypeptide is RxLR effector protein Avh52 (Phytophthora sojae (Soybean stem and root rot agent)).